The following is a 1039-amino-acid chain: Integrin alpha-4 (1039 aa).

The N-terminal stretch at 1-40 (MFSTKSAWLRNGGADQGPRGIALREAVMLLLYFGVPTGPS) is a signal peptide. The Extracellular portion of the chain corresponds to 41–983 (YNLDPENALL…LHHQRPKRHF (943 aa)). FG-GAP repeat units follow at residues 42-107 (NLDP…PNQT), 117-184 (SGEP…TELS), 193-244 (DYTR…QYKA), 246-298 (VDRQ…ENEL), 299-358 (NIVY…GAVM), 362-419 (ERVL…GISS), and 423-485 (QRIE…HPES). N-linked (GlcNAc...) asparagine glycosylation is found at Asn86, Asn105, and Asn145. An intrachain disulfide couples Cys98 to Cys108. 2 disulfides stabilise this stretch: Cys151/Cys172 and Cys190/Cys205. N-linked (GlcNAc...) asparagine glycosylation occurs at Asn236. Ca(2+) is bound by residues Asp321, Asn323, Asp325, Asp329, Asp384, Asp386, Asp388, Asp392, Asp446, Asp448, Asn450, Tyr452, and Asp454. Residue Asn487 is glycosylated (N-linked (GlcNAc...) asparagine). 2 disulfide bridges follow: Cys493–Cys502 and Cys508–Cys564. 2 N-linked (GlcNAc...) asparagine glycosylation sites follow: Asn525 and Asn545. The SG1 signature appears at 613–623 (KKEKDVIRKMI). Residues Cys629 and Cys634 are joined by a disulfide bond. N-linked (GlcNAc...) asparagine glycosylation is found at Asn633, Asn652, and Asn667. Cysteines 705 and 718 form a disulfide. Asn813 and Asn828 each carry an N-linked (GlcNAc...) asparagine glycan. Disulfide bonds link Cys859-Cys897 and Cys904-Cys909. A helical membrane pass occupies residues 984-1007 (TIIIITISLLLGLIVLLLISCVMW). The Cytoplasmic segment spans residues 1008-1039 (KAGFFKRQYKSILQEENRRDSWSYVNSKSNDD). Positions 1010–1014 (GFFKR) match the GFFKR motif motif. Ser1028 carries the phosphoserine modification.

It belongs to the integrin alpha chain family. As to quaternary structure, heterodimer of an alpha and a beta subunit. The alpha subunit can sometimes be cleaved into two non-covalently associated fragments. Alpha-4 associates with either beta-1 or beta-7. Alpha-4 interacts with PXN, LPXN, and TGFB1I1/HIC5. Interacts with CSPG4 through CSPG4 chondroitin sulfate glycosaminoglycan. Interacts with JAML; integrin alpha-4/beta-1 may regulate leukocyte to endothelial cells adhesion by controlling JAML homodimerization. ITGA4:ITGB1 is found in a ternary complex with CX3CR1 and CX3CL1. Interacts with MDK. ITGA4:ITGB1 interacts with MDK; this interaction mediates MDK-induced osteoblast cells migration through PXN phosphorylation. Integrin ITGA4:ITGB1 interacts with SVEP1 (via Sushi domain 21); thereby inhibits Ca(2+) intracellular signaling and as a result represses vasocontraction. ITGA4:ITGB1 interacts with SELP. ITGA4:ITGB1 interacts with BCAM. Phosphorylation on Ser-1028 inhibits PXN binding. Expressed in the media layer of the arterial wall (at protein level). Weakly expression in the thymus, spleen and mesenteric lymph nodes.

Its subcellular location is the membrane. Its function is as follows. Integrins alpha-4/beta-1 (VLA-4 or LPAM-2) and alpha-4/beta-7 (LPAM-1) are receptors for fibronectin. They recognize one or more domains within the alternatively spliced CS-1 and CS-5 regions of fibronectin. They are also receptors for VCAM1. Integrin alpha-4/beta-1 recognizes the sequence Q-I-D-S in VCAM1. Integrin alpha-4/beta-7 is also a receptor for MADCAM1. It recognizes the sequence L-D-T in MADCAM1. On activated endothelial cells integrin VLA-4 triggers homotypic aggregation for most VLA-4-positive leukocyte cell lines. It may also participate in cytolytic T-cell interactions with target cells. ITGA4:ITGB1 binds to fractalkine (CX3CL1) and may act as its coreceptor in CX3CR1-dependent fractalkine signaling. ITGA4:ITGB1 binds to PLA2G2A via a site (site 2) which is distinct from the classical ligand-binding site (site 1) and this induces integrin conformational changes and enhanced ligand binding to site 1. Integrin ITGA4:ITGB1 represses PRKCA-mediated L-type voltage-gated channel Ca(2+) influx and ROCK-mediated calcium sensitivity in vascular smooth muscle cells via its interaction with SVEP1, thereby inhibiting vasocontraction. In Mus musculus (Mouse), this protein is Integrin alpha-4 (Itga4).